A 571-amino-acid polypeptide reads, in one-letter code: S100P-binding protein (571 aa).

Residues Ser270–Glu280 are compositionally biased toward acidic residues. 2 disordered regions span residues Ser270–Val312 and Asn356–Ser385. Polar residues predominate over residues Thr299–Leu309. Residues Pro365–Pro378 are compositionally biased toward pro residues.

The protein resides in the nucleus. This chain is S100P-binding protein (s100pbp), found in Xenopus tropicalis (Western clawed frog).